The chain runs to 133 residues: Small ribosomal subunit protein eS8 (133 aa).

The tract at residues 1–34 (MGVWHGRSLRKPTGGRIRPHRKKRKFEMGNPPTE) is disordered.

The protein belongs to the eukaryotic ribosomal protein eS8 family. In terms of assembly, part of the 30S ribosomal subunit.

The protein is Small ribosomal subunit protein eS8 of Methanopyrus kandleri (strain AV19 / DSM 6324 / JCM 9639 / NBRC 100938).